The sequence spans 819 residues: Glycine-rich domain-containing protein 1 (819 aa).

Functionally, plays a regulatory role in abscisic acid (ABA) signaling and tolerance to abiotic stress during germination. May be involved in the regulation of the ABI transcriptional factors. The chain is Glycine-rich domain-containing protein 1 from Arabidopsis thaliana (Mouse-ear cress).